Reading from the N-terminus, the 342-residue chain is MFATPLRQLSSLKRSGIAGQEQAQLYEITNKGYGKDAVKVMHINRKGPVHSIQELEVGTHLKLYSNKDYMLGNNSDVVATDSQKNTVYLLAKKHGIESPEKFALILAKHFLSTYAHVEEVHVHVEAYPWQRMTQDVSDNIGKGYCENNCNSRSNGNCQLHNHAFIFTPTAHDYCDVILTRQDPKQTVISGIKGLRVLKTTQSSFVNFVDDEFRTLADQYDRIFSTVVECSWEYSDTESVNFLHAWETVKDIVVRNFAGDPSVGIPSPSVQHTLYLSEKQVLDVLPQVSVVSMTMPNKHYFNFDTKPFQQLVPGENNEVFIPTDKPHGTIYAQLSRKSLKSHL.

Active-site charge relay system residues include Lys-35 and Thr-80. Residues Thr-80, Asp-81, Phe-204, Arg-221, Val-269, Gln-270, and Asn-296 each contribute to the urate site. The active-site Charge relay system is His-298. A Microbody targeting signal motif is present at residues 340-342; the sequence is SHL.

It belongs to the uricase family. In terms of tissue distribution, malpighian tubules.

It is found in the peroxisome. It carries out the reaction urate + O2 + H2O = 5-hydroxyisourate + H2O2. The protein operates within purine metabolism; urate degradation; (S)-allantoin from urate: step 1/3. Its activity is regulated as follows. Repressed by 20-hydroxyecdysone. Catalyzes the oxidation of uric acid to 5-hydroxyisourate, which is further processed to form (S)-allantoin. This Drosophila virilis (Fruit fly) protein is Uricase (Uro).